The chain runs to 67 residues: Surface composition regulator (67 aa).

It belongs to the GlgS family.

In terms of biological role, major determinant of cell surface composition. Negatively regulates motility, adhesion and synthesis of biofilm exopolysaccharides. This is Surface composition regulator from Salmonella enteritidis PT4 (strain P125109).